A 103-amino-acid polypeptide reads, in one-letter code: UPF0132 membrane protein AF_0105 (103 aa).

3 consecutive transmembrane segments (helical) span residues 5–25, 35–55, and 58–78; these read VAGA…LLME, AMQS…LSFI, and IGVL…LVCI.

This sequence belongs to the UPF0132 family.

Its subcellular location is the cell membrane. The protein is UPF0132 membrane protein AF_0105 of Archaeoglobus fulgidus (strain ATCC 49558 / DSM 4304 / JCM 9628 / NBRC 100126 / VC-16).